Consider the following 345-residue polypeptide: MSSLRLRLCLLLLLPITISCVTVTLTDLPAFREAPAFRNGRECSKTTWIPSDHEHNPSIIHIAMTLDAIYLRGSVAGVFSVLQHASCPENIVFHFIATHRRSADLRRIISSTFPYLTYHIYHFDPNLVRSKISSSIRRALDQPLNYARIYLADLLPIAVRRVIYFDSDLVVVDDVAKLWRIDLRRHVVGAPEYCHANFTNYFTSRFWSSQGYKSALKDRKPCYFNTGVMVIDLGKWRERRVTVKLETWMRIQKRHRIYELGSLPPFLLVFAGDVEPVEHRWNQHGLGGDNLEGLCRNLHPGPVSLLHWSGKGKPWLRLDSRRPCPLDSLWAPYDLFRYSPLISDS.

Topologically, residues 1 to 7 (MSSLRLR) are cytoplasmic. The helical; Signal-anchor for type II membrane protein transmembrane segment at 8–28 (LCLLLLLPITISCVTVTLTDL) threads the bilayer. Topologically, residues 29–345 (PAFREAPAFR…FRYSPLISDS (317 aa)) are lumenal. Residue Asn197 is glycosylated (N-linked (GlcNAc...) asparagine).

The protein belongs to the glycosyltransferase 8 family.

It localises to the golgi apparatus membrane. The protein operates within glycan metabolism; pectin biosynthesis. May be involved in pectin and/or xylans biosynthesis in cell walls. This Arabidopsis thaliana (Mouse-ear cress) protein is Probable galacturonosyltransferase-like 3 (GATL3).